We begin with the raw amino-acid sequence, 273 residues long: SPRY domain-containing SOCS box protein 4 (273 aa).

A disordered region spans residues 1–34 (MGQKLSGSLKSVEVREPALRPAKRELRGAEPGRP). Residues 12–34 (VEVREPALRPAKRELRGAEPGRP) show a composition bias toward basic and acidic residues. The 200-residue stretch at 34–233 (PARLDQLLDM…MRYINGLDPE (200 aa)) folds into the B30.2/SPRY domain. In terms of domain architecture, SOCS box spans 234 to 273 (PLPLMDLCRRSIRSALGRQRLQDISSLPLPQSLKNYLQYQ).

Belongs to the SPSB family. In terms of assembly, component of the probable ECS(SPSB4) E3 ubiquitin-protein ligase complex which contains CUL5, RNF7/RBX2, Elongin BC complex and SPSB4. Interacts with CUL5; RNF7; ELOB and ELOC. Interacts with MET. Interacts (via B30.2/SPRY domain) with PAWR; this interaction occurs in association with the Elongin BC complex. Interacts with NOS2. Interacts with EPHB2.

The protein localises to the cytoplasm. Its subcellular location is the cytosol. The protein operates within protein modification; protein ubiquitination. In terms of biological role, substrate recognition component of a SCF-like ECS (Elongin BC-CUL2/5-SOCS-box protein) E3 ubiquitin-protein ligase complex which mediates the ubiquitination and subsequent proteasomal degradation of target proteins. Negatively regulates nitric oxide (NO) production and limits cellular toxicity in activated macrophages by mediating the ubiquitination and proteasomal degradation of NOS2. Acts as a bridge which links NOS2 with the ECS E3 ubiquitin ligase complex components ELOC and CUL5. Diminishes EphB2-dependent cell repulsive responses by mediating the ubiquitination and degradation of EphB2/CTF2. Regulates cellular clock function by mediating the ubiquitin/proteasome-dependent degradation of the circadian transcriptional repressor NR1D1. This Homo sapiens (Human) protein is SPRY domain-containing SOCS box protein 4 (SPSB4).